The chain runs to 672 residues: uncharacterized protein (672 aa).

A compositionally biased stretch (basic and acidic residues) spans 1–10 (MAKSDGDDPL). The segment at 1-40 (MAKSDGDDPLRPASPRLRSSRRHSLRYSAYTGGPDPLAPP) is disordered.

This is an uncharacterized protein from Mycobacterium tuberculosis (strain CDC 1551 / Oshkosh).